The primary structure comprises 583 residues: Glycine--tRNA ligase (583 aa).

Residues Arg-100 and Glu-166 each coordinate substrate. Residues 198-200 (RNE), 208-213 (VRLREF), 328-329 (EV), and 443-446 (GTDR) each bind ATP. 213-217 (FTIME) serves as a coordination point for substrate. 439-443 (EPSFG) provides a ligand contact to substrate.

It belongs to the class-II aminoacyl-tRNA synthetase family.

Its subcellular location is the cytoplasm. It catalyses the reaction tRNA(Gly) + glycine + ATP = glycyl-tRNA(Gly) + AMP + diphosphate. In terms of biological role, catalyzes the attachment of glycine to tRNA(Gly). The polypeptide is Glycine--tRNA ligase (Aeropyrum pernix (strain ATCC 700893 / DSM 11879 / JCM 9820 / NBRC 100138 / K1)).